Reading from the N-terminus, the 761-residue chain is Elongation factor G, mitochondrial (761 aa).

A mitochondrion-targeting transit peptide spans 1 to 42; the sequence is MSVQKMMRVPRKMVGGRIPFFTCSKVFSGFSRRSFHESPLAR. One can recognise a tr-type G domain in the interval 68–349; that stretch reads NKLRNIGISA…AIVDYLPNPS (282 aa). GTP contacts are provided by residues 77–84, 148–152, and 202–205; these read AHIDSGKT, DTPGH, and NKMD.

It belongs to the TRAFAC class translation factor GTPase superfamily. Classic translation factor GTPase family. EF-G/EF-2 subfamily. Post-translationally, the precursor is processed in two steps involving mitochondrial intermediate peptidase (MIP) and mitochondrial processing peptidase (MPP).

The protein localises to the mitochondrion. It functions in the pathway protein biosynthesis; polypeptide chain elongation. Its function is as follows. Mitochondrial GTPase that catalyzes the GTP-dependent ribosomal translocation step during translation elongation. During this step, the ribosome changes from the pre-translocational (PRE) to the post-translocational (POST) state as the newly formed A-site-bound peptidyl-tRNA and P-site-bound deacylated tRNA move to the P and E sites, respectively. Catalyzes the coordinated movement of the two tRNA molecules, the mRNA and conformational changes in the ribosome. The chain is Elongation factor G, mitochondrial from Saccharomyces cerevisiae (strain YJM789) (Baker's yeast).